We begin with the raw amino-acid sequence, 763 residues long: MKNSLFVTKRNGKKEKINLDKIHKVLNWAAKGLENISVSQVELRSRIQFYNNISTVNIHETIIKAAADLISENTPDYQYMAARLAIFHLRKKAYGQFEPPNLYYHVKKMVQLGKYDEKLLQNYSFEEYVEMNSFVDHRRDMNFSYAAVKQLEAKYLLQNRVTGQIYESAQFLYILISACLFSKYEKKVRMNYIQRFYNAISTFKISLPTPIMSGVRTPTRQFSSCVLIECADNLNSINATTSAIVKYVSQRAGIGINAGQIRALGSPIRNGEAFHTGCIPFYKHFQSAVKSCSQGGVRGGAATVFYPIWHLEIESLLVLKNNRGIEENRVRHLDYAVQINKLMYQRMLLGQKITLFSPSDVPKLYEFFFSDQKKFKEIYIKYEKNRNIRKKSINAIDLFCLIMRERASTGRIYIQHVDHCNSHSAFNSKLATIRQSNLCLEITLPTKPLNNIDDKNGEIALCTLSALNLGLINDLHDLKELSTLSVRALDEILEYQNYPVVCAKKSAISRRSLGIGVINFAYYLAKNKVRYSDGSAKNLTHKTFEAIQYYLLKASCELAKEKGSCSLFNQTNYYLGKFPIDTYKKDIDSICNEPLHLNWNLLRKKIKKYGLRNSTLSALMPSETSSQISNATNGIEPPRGFISIKSSKDGMLRQVVPEYKKLKSEYELLWEIPNNIGYLELVAIMQKFVDQSISANTNYDPKRFLNEKIPMKQLIYDLLVAYKLGIKTLYYQNTRDGAEDNQNLNKSIENIKEDNCTSGSCTI.

The region spanning 5-95 (LFVTKRNGKK…IFHLRKKAYG (91 aa)) is the ATP-cone domain. ATP is bound by residues K9, 15 to 21 (EKINLDK), T55, and K91. Residue T209 coordinates GDP. An intrachain disulfide couples C225 to C462. Residues 232 to 234 (DNL), R262, and R269 each bind dTTP. Position 437 (N437) interacts with GDP. N437 (proton acceptor) is an active-site residue. Residue C439 is the Cysteine radical intermediate of the active site. Residues E441 and 623-625 (ETS) each bind GDP. Residue E441 is the Proton acceptor of the active site.

The protein belongs to the ribonucleoside diphosphate reductase large chain family. In terms of assembly, tetramer of two alpha and two beta subunits.

It carries out the reaction a 2'-deoxyribonucleoside 5'-diphosphate + [thioredoxin]-disulfide + H2O = a ribonucleoside 5'-diphosphate + [thioredoxin]-dithiol. Its activity is regulated as follows. Under complex allosteric control mediated by deoxynucleoside triphosphates and ATP binding to separate specificity and activation sites on the alpha subunit. The type of nucleotide bound at the specificity site determines substrate preference. It seems probable that ATP makes the enzyme reduce CDP and UDP, dGTP favors ADP reduction and dTTP favors GDP reduction. Stimulated by ATP and inhibited by dATP binding to the activity site. Provides the precursors necessary for DNA synthesis. Catalyzes the biosynthesis of deoxyribonucleotides from the corresponding ribonucleotides. The polypeptide is Ribonucleoside-diphosphate reductase subunit alpha (nrdA) (Buchnera aphidicola subsp. Schizaphis graminum (strain Sg)).